The sequence spans 474 residues: Gasdermin-C (474 aa).

The triggers pyroptosis stretch occupies residues 1–237; sequence MLYTFDQVSK…TCAILLSANA (237 aa).

Belongs to the gasdermin family. As to quaternary structure, homooligomer; homooligomeric ring-shaped pore complex containing 27-28 subunits when inserted in the membrane. In terms of processing, cleavage by CASP8 relieves autoinhibition by releasing the N-terminal moiety (Gasdermin-C, N-terminal) that initiates pyroptosis. Post-translationally, palmitoylated.

Its subcellular location is the cytoplasm. It localises to the cytosol. It is found in the cell membrane. Its activity is regulated as follows. The full-length protein before cleavage is inactive: intramolecular interactions between N- and C-terminal domains mediate autoinhibition in the absence of activation signal. The intrinsic pyroptosis-inducing activity is carried by the released N-terminal moiety (Gasdermin-C, N-terminal) following cleavage by caspase CASP8. Functionally, this form constitutes the precursor of the pore-forming protein: upon cleavage, the released N-terminal moiety (Gasdermin-C, N-terminal) binds to membranes and forms pores, triggering pyroptosis. Pore-forming protein that causes membrane permeabilization and pyroptosis. Produced by the cleavage of gasdermin-C by caspase CASP8 in response to death signals. After cleavage, moves to the plasma membrane where it strongly binds to membrane inner leaflet lipids. Homooligomerizes within the membrane and forms pores of 10-15 nanometers (nm) of inner diameter, triggering pyroptosis. This is Gasdermin-C from Rattus norvegicus (Rat).